Reading from the N-terminus, the 521-residue chain is Protein nucleotidyltransferase YdiU (521 aa).

ATP is bound by residues Gly-109, Gly-111, Arg-112, Lys-131, Asp-143, Gly-144, Arg-194, and Arg-201. Asp-270 functions as the Proton acceptor in the catalytic mechanism. Mg(2+) is bound by residues Asn-271 and Asp-280. Asp-280 contributes to the ATP binding site.

Belongs to the SELO family. Mg(2+) serves as cofactor. Requires Mn(2+) as cofactor.

It carries out the reaction L-seryl-[protein] + ATP = 3-O-(5'-adenylyl)-L-seryl-[protein] + diphosphate. The catalysed reaction is L-threonyl-[protein] + ATP = 3-O-(5'-adenylyl)-L-threonyl-[protein] + diphosphate. It catalyses the reaction L-tyrosyl-[protein] + ATP = O-(5'-adenylyl)-L-tyrosyl-[protein] + diphosphate. The enzyme catalyses L-histidyl-[protein] + UTP = N(tele)-(5'-uridylyl)-L-histidyl-[protein] + diphosphate. It carries out the reaction L-seryl-[protein] + UTP = O-(5'-uridylyl)-L-seryl-[protein] + diphosphate. The catalysed reaction is L-tyrosyl-[protein] + UTP = O-(5'-uridylyl)-L-tyrosyl-[protein] + diphosphate. Its function is as follows. Nucleotidyltransferase involved in the post-translational modification of proteins. It can catalyze the addition of adenosine monophosphate (AMP) or uridine monophosphate (UMP) to a protein, resulting in modifications known as AMPylation and UMPylation. The polypeptide is Protein nucleotidyltransferase YdiU (Burkholderia thailandensis (strain ATCC 700388 / DSM 13276 / CCUG 48851 / CIP 106301 / E264)).